Reading from the N-terminus, the 300-residue chain is MLASTVTGALQEQGRAKVNLTLRVVGRRADGYHDLESVVAFADCADQLTLAPSPELTLTTTGPLADACGDTSDNLVLKAARLLAEAVPGLTLGAFTLEKVLPVAAGIGGGSADAAAALRLLARLNGLSLDDPRLQAVALKTGADVPVCVPSRACTMTGVGENLQPLALPVLPCVMINPRVPVATKDVFQALGLKPGDLLVGVSDVLAAPAWPKAGASIGDWVAALDQVKNDLEPPALKVQPIIGTVLDALRASNGVLLARMSGSGATCFAIYGGDADAKIAGAAIAAAHPEWWVHAGTLS.

Residue K17 is part of the active site. 102–112 (PVAAGIGGGSA) serves as a coordination point for ATP. The active site involves D144.

It belongs to the GHMP kinase family. IspE subfamily.

The enzyme catalyses 4-CDP-2-C-methyl-D-erythritol + ATP = 4-CDP-2-C-methyl-D-erythritol 2-phosphate + ADP + H(+). It functions in the pathway isoprenoid biosynthesis; isopentenyl diphosphate biosynthesis via DXP pathway; isopentenyl diphosphate from 1-deoxy-D-xylulose 5-phosphate: step 3/6. Catalyzes the phosphorylation of the position 2 hydroxy group of 4-diphosphocytidyl-2C-methyl-D-erythritol. The sequence is that of 4-diphosphocytidyl-2-C-methyl-D-erythritol kinase from Bradyrhizobium sp. (strain ORS 278).